Reading from the N-terminus, the 280-residue chain is Pantothenate synthetase (280 aa).

31 to 38 contacts ATP; it reads MGNLHAGH. His38 serves as the catalytic Proton donor. (R)-pantoate is bound at residue Gln62. Residue Gln62 participates in beta-alanine binding. 150–153 contributes to the ATP binding site; sequence GKKD. (R)-pantoate is bound at residue Gln156. ATP is bound by residues Val179 and 187–190; that span reads MSSR.

Belongs to the pantothenate synthetase family. Homodimer.

The protein localises to the cytoplasm. It carries out the reaction (R)-pantoate + beta-alanine + ATP = (R)-pantothenate + AMP + diphosphate + H(+). Its pathway is cofactor biosynthesis; (R)-pantothenate biosynthesis; (R)-pantothenate from (R)-pantoate and beta-alanine: step 1/1. In terms of biological role, catalyzes the condensation of pantoate with beta-alanine in an ATP-dependent reaction via a pantoyl-adenylate intermediate. The polypeptide is Pantothenate synthetase (Xanthomonas euvesicatoria pv. vesicatoria (strain 85-10) (Xanthomonas campestris pv. vesicatoria)).